The sequence spans 550 residues: CTP synthase (550 aa).

The segment at 1–277 is amidoligase domain; it reads MNGSADAGPR…GRAVERALGL (277 aa). A CTP-binding site is contributed by Ser23. Ser23 is a binding site for UTP. 24–29 lines the ATP pocket; that stretch reads SLGKGI. L-glutamine is bound at residue Tyr64. Asp81 lines the ATP pocket. 2 residues coordinate Mg(2+): Asp81 and Glu151. CTP contacts are provided by residues 158 to 160, 198 to 203, and Lys234; these read DIE and KTKPTQ. UTP is bound by residues 198-203 and Lys234; that span reads KTKPTQ. The Glutamine amidotransferase type-1 domain maps to 302–549; sequence KIAIAGKYVK…VEAALAYQER (248 aa). Gly364 provides a ligand contact to L-glutamine. Cys391 serves as the catalytic Nucleophile; for glutamine hydrolysis. L-glutamine contacts are provided by residues 392–395, Glu415, and Arg472; that span reads LGLQ. Residues His522 and Glu524 contribute to the active site.

The protein belongs to the CTP synthase family. Homotetramer.

It catalyses the reaction UTP + L-glutamine + ATP + H2O = CTP + L-glutamate + ADP + phosphate + 2 H(+). The catalysed reaction is L-glutamine + H2O = L-glutamate + NH4(+). The enzyme catalyses UTP + NH4(+) + ATP = CTP + ADP + phosphate + 2 H(+). The protein operates within pyrimidine metabolism; CTP biosynthesis via de novo pathway; CTP from UDP: step 2/2. Allosterically activated by GTP, when glutamine is the substrate; GTP has no effect on the reaction when ammonia is the substrate. The allosteric effector GTP functions by stabilizing the protein conformation that binds the tetrahedral intermediate(s) formed during glutamine hydrolysis. Inhibited by the product CTP, via allosteric rather than competitive inhibition. Catalyzes the ATP-dependent amination of UTP to CTP with either L-glutamine or ammonia as the source of nitrogen. Regulates intracellular CTP levels through interactions with the four ribonucleotide triphosphates. The chain is CTP synthase from Thermus thermophilus (strain ATCC BAA-163 / DSM 7039 / HB27).